A 385-amino-acid chain; its full sequence is Cell division protein FtsZ (385 aa).

GTP is bound by residues 37 to 41 (GGGSN), 125 to 127 (GTG), Glu156, Lys160, and Asp204.

It belongs to the FtsZ family. As to quaternary structure, homodimer. Polymerizes to form a dynamic ring structure in a strictly GTP-dependent manner. Interacts directly with several other division proteins.

The protein resides in the cytoplasm. Its function is as follows. Essential cell division protein that forms a contractile ring structure (Z ring) at the future cell division site. The regulation of the ring assembly controls the timing and the location of cell division. One of the functions of the FtsZ ring is to recruit other cell division proteins to the septum to produce a new cell wall between the dividing cells. Binds GTP and shows GTPase activity. The sequence is that of Cell division protein FtsZ from Helicobacter pylori (strain ATCC 700392 / 26695) (Campylobacter pylori).